The chain runs to 155 residues: Transcription antitermination protein NusB (155 aa).

Belongs to the NusB family.

In terms of biological role, involved in transcription antitermination. Required for transcription of ribosomal RNA (rRNA) genes. Binds specifically to the boxA antiterminator sequence of the ribosomal RNA (rrn) operons. The polypeptide is Transcription antitermination protein NusB (Vibrio vulnificus (strain CMCP6)).